We begin with the raw amino-acid sequence, 378 residues long: Chaperone protein DnaJ (378 aa).

The region spanning 5–70 (DYYEVLSVGR…DKKAAYDQFG (66 aa)) is the J domain. The CR-type zinc-finger motif lies at 133-211 (GLTKELRIPT…CHGEGRVEKS (79 aa)). Zn(2+) is bound by residues C146, C149, C163, C166, C185, C188, C199, and C202. CXXCXGXG motif repeat units lie at residues 146–153 (CDTCDGSG), 163–170 (CGTCHGQG), 185–192 (CPTCHGRG), and 199–206 (CNSCHGEG).

It belongs to the DnaJ family. As to quaternary structure, homodimer. Zn(2+) is required as a cofactor.

It is found in the cytoplasm. In terms of biological role, participates actively in the response to hyperosmotic and heat shock by preventing the aggregation of stress-denatured proteins and by disaggregating proteins, also in an autonomous, DnaK-independent fashion. Unfolded proteins bind initially to DnaJ; upon interaction with the DnaJ-bound protein, DnaK hydrolyzes its bound ATP, resulting in the formation of a stable complex. GrpE releases ADP from DnaK; ATP binding to DnaK triggers the release of the substrate protein, thus completing the reaction cycle. Several rounds of ATP-dependent interactions between DnaJ, DnaK and GrpE are required for fully efficient folding. Also involved, together with DnaK and GrpE, in the DNA replication of plasmids through activation of initiation proteins. The polypeptide is Chaperone protein DnaJ (Shewanella woodyi (strain ATCC 51908 / MS32)).